Consider the following 84-residue polypeptide: Putative membrane protein insertion efficiency factor (84 aa).

Belongs to the UPF0161 family.

It localises to the cell membrane. In terms of biological role, could be involved in insertion of integral membrane proteins into the membrane. The chain is Putative membrane protein insertion efficiency factor from Staphylococcus carnosus (strain TM300).